The following is a 242-amino-acid chain: Probable transcriptional regulatory protein BamMC406_2210 (242 aa).

This sequence belongs to the TACO1 family.

It is found in the cytoplasm. In Burkholderia ambifaria (strain MC40-6), this protein is Probable transcriptional regulatory protein BamMC406_2210.